The following is a 98-amino-acid chain: Putative protein adenylyltransferase MJ0128 (98 aa).

The GSX(10)DXD motif signature appears at 31 to 45 (GSYARNEQTEKSDID). The Mg(2+) site is built by D43, D45, and D75.

Belongs to the MntA antitoxin family. As to quaternary structure, probably forms a complex with cognate toxin MJ0127. It depends on Mg(2+) as a cofactor.

It carries out the reaction L-tyrosyl-[protein] + ATP = O-(5'-adenylyl)-L-tyrosyl-[protein] + diphosphate. The enzyme catalyses O-(5'-adenylyl)-L-tyrosyl-[protein] + ATP = O-[5'-(adenylyl-(5'-&gt;3')-adenylyl)]-L-tyrosyl-[protein] + diphosphate. Its function is as follows. Probable antitoxin component of a putative type VII toxin-antitoxin (TA) system. Neutralizes cognate toxic MJ0127 by di-AMPylation. The sequence is that of Putative protein adenylyltransferase MJ0128 from Methanocaldococcus jannaschii (strain ATCC 43067 / DSM 2661 / JAL-1 / JCM 10045 / NBRC 100440) (Methanococcus jannaschii).